Consider the following 586-residue polypeptide: Putative Lon protease homolog (586 aa).

In terms of domain architecture, Lon proteolytic spans 346–543 (GERIGQINAL…TDALPLLLNL (198 aa)). Catalysis depends on residues Ser-438 and Lys-481.

This sequence belongs to the peptidase S16 family.

The sequence is that of Putative Lon protease homolog (ycbZ) from Escherichia coli (strain K12).